Reading from the N-terminus, the 111-residue chain is Large ribosomal subunit protein uL24 (111 aa).

Belongs to the universal ribosomal protein uL24 family. As to quaternary structure, part of the 50S ribosomal subunit.

Its function is as follows. One of two assembly initiator proteins, it binds directly to the 5'-end of the 23S rRNA, where it nucleates assembly of the 50S subunit. In terms of biological role, one of the proteins that surrounds the polypeptide exit tunnel on the outside of the subunit. In Cytophaga hutchinsonii (strain ATCC 33406 / DSM 1761 / CIP 103989 / NBRC 15051 / NCIMB 9469 / D465), this protein is Large ribosomal subunit protein uL24.